Here is a 513-residue protein sequence, read N- to C-terminus: ATP synthase subunit alpha (513 aa).

169–176 (GDRQCGKT) serves as a coordination point for ATP.

It belongs to the ATPase alpha/beta chains family. As to quaternary structure, F-type ATPases have 2 components, CF(1) - the catalytic core - and CF(0) - the membrane proton channel. CF(1) has five subunits: alpha(3), beta(3), gamma(1), delta(1), epsilon(1). CF(0) has three main subunits: a(1), b(2) and c(9-12). The alpha and beta chains form an alternating ring which encloses part of the gamma chain. CF(1) is attached to CF(0) by a central stalk formed by the gamma and epsilon chains, while a peripheral stalk is formed by the delta and b chains.

The protein resides in the cell inner membrane. It carries out the reaction ATP + H2O + 4 H(+)(in) = ADP + phosphate + 5 H(+)(out). Its function is as follows. Produces ATP from ADP in the presence of a proton gradient across the membrane. The alpha chain is a regulatory subunit. In Burkholderia orbicola (strain AU 1054), this protein is ATP synthase subunit alpha.